The primary structure comprises 548 residues: T-complex protein 1 subunit theta (548 aa).

The residue at position 2 (A2) is an N-acetylalanine. A Phosphoserine modification is found at S23. Phosphotyrosine is present on Y30. Residues Y47 and G48 each coordinate ADP. A Mg(2+)-binding site is contributed by D99. ADP contacts are provided by G100, T101, N102, and F103. ATP is bound by residues G100, T101, and N102. S162 carries the post-translational modification Phosphoserine. ADP-binding residues include M169, S170, and K171. ATP-binding residues include S170 and K171. Glycyl lysine isopeptide (Lys-Gly) (interchain with G-Cter in SUMO2) cross-links involve residues K224, K254, and K260. S269 and S317 each carry phosphoserine. Residues K318 and K400 each carry the N6-acetyllysine modification. G412 lines the ADP pocket. G412 provides a ligand contact to ATP. K459 participates in a covalent cross-link: Glycyl lysine isopeptide (Lys-Gly) (interchain with G-Cter in SUMO1). N6-acetyllysine is present on K466. Position 499 (D499) interacts with ADP. ATP contacts are provided by D499 and K504. Y505 carries the post-translational modification Phosphotyrosine. The disordered stretch occupies residues 529 to 548 (PAGGPKPPSGKKDWDEDQND). K534 is covalently cross-linked (Glycyl lysine isopeptide (Lys-Gly) (interchain with G-Cter in SUMO2)). Phosphoserine is present on S537. K539 participates in a covalent cross-link: Glycyl lysine isopeptide (Lys-Gly) (interchain with G-Cter in SUMO2).

Belongs to the TCP-1 chaperonin family. In terms of assembly, component of the chaperonin-containing T-complex (TRiC), a hexadecamer composed of two identical back-to-back stacked rings enclosing a protein folding chamber. Each ring is made up of eight different subunits: TCP1/CCT1, CCT2, CCT3, CCT4, CCT5, CCT6A/CCT6, CCT7, CCT8. Interacts with PACRG. Interacts with DNAAF4. Interacts with synaptic plasticity regulator PANTS.

Its subcellular location is the cytoplasm. It localises to the cytoskeleton. The protein localises to the microtubule organizing center. The protein resides in the centrosome. It is found in the cilium basal body. It catalyses the reaction ATP + H2O = ADP + phosphate + H(+). Component of the chaperonin-containing T-complex (TRiC), a molecular chaperone complex that assists the folding of actin, tubulin and other proteins upon ATP hydrolysis. The TRiC complex mediates the folding of WRAP53/TCAB1, thereby regulating telomere maintenance. As part of the TRiC complex may play a role in the assembly of BBSome, a complex involved in ciliogenesis regulating transports vesicles to the cilia. This chain is T-complex protein 1 subunit theta (CCT8), found in Bos taurus (Bovine).